The primary structure comprises 486 residues: Sensor protein PhoQ (486 aa).

At 1-16 (MKKLLRLFFPLSLRVR) the chain is on the cytoplasmic side. The chain crosses the membrane as a helical span at residues 17 to 37 (FLLATAAVVLVLSLAYGMVAL). The Periplasmic portion of the chain corresponds to 38–194 (IGYSVSFDKT…LKSSYMVWSW (157 aa)). A divalent metal cation contacts are provided by Asp151 and Asp152. The chain crosses the membrane as a helical span at residues 195–215 (FIYVLSANLLLVIPLLWVAAW). The HAMP domain occupies 215–266 (WWSLRPIEALAKEVRELEEHNRELLNPATTRELTSLVRNLNRLLKSERERYD). Residues 216–486 (WSLRPIEALA…GRQHSAPKDE (271 aa)) are Cytoplasmic-facing. The Histidine kinase domain maps to 274-480 (DLTHSLKTPL…RMEVIFGRQH (207 aa)). His277 is subject to Phosphohistidine; by autocatalysis. Residue Asn385 participates in Mg(2+) binding. ATP contacts are provided by residues 385 to 393 (NVLDNACKY), 415 to 420 (DDGPGI), and 434 to 446 (RVDTLRPGQGVGL). Gln442 lines the Mg(2+) pocket.

Homodimer; probably dimerizes via the cytoplasmic domain. Probably interacts with MgrB in the periplasm, altering its activity and that of downstream effector PhoP.

The protein resides in the cell inner membrane. The enzyme catalyses ATP + protein L-histidine = ADP + protein N-phospho-L-histidine.. Its activity is regulated as follows. Acetyl-CoA acts as a non-competitive inhibitor of the PhoQ autokinase activity. Feedback inhibited by MgrB, which seems to bind PhoQ, altering its activity and that of downstream effector PhoP. Its function is as follows. Member of the two-component regulatory system PhoP/PhoQ involved in adaptation to low Mg(2+) environments and the control of acid resistance genes. In low periplasmic Mg(2+), PhoQ functions as a membrane-associated protein kinase that undergoes autophosphorylation and subsequently transfers the phosphate to PhoP, resulting in the expression of PhoP-activated genes (PAG) and repression of PhoP-repressed genes (PRG). In high periplasmic Mg(2+), acts as a protein phosphatase that dephosphorylates phospho-PhoP, resulting in the repression of PAG and may lead to expression of some PRG. PhoP-regulated transcription is redox-sensitive, being activated when the periplasm becomes more reducing (deletion of dsbA/dsbB, or treatment with dithiothreitol). MgrB acts between DsbA/DsbB and PhoP/PhoQ in this pathway; the 2 periplasmic Cys residues of MgrB are required for its action on PhoQ, which then acts on PhoP. Mediates magnesium influx to the cytosol by activation of mgtA. Promotes expression of the two-component regulatory system rstA/rstB and transcription of the hemL, mgrB, nagA, slyB, vboR and yrbL genes. This Escherichia coli (strain K12) protein is Sensor protein PhoQ (phoQ).